The chain runs to 339 residues: D-alanine--D-alanine ligase (339 aa).

The ATP-grasp domain maps to 126-333 (KQVLDSAGIP…YSELVTRLVE (208 aa)). 158-213 (AAELGYPLFVKPANLGSSVGISKVGSPEELDAALTLAFGLDRRVILEAMTPHKPRE) provides a ligand contact to ATP. Positions 286, 300, and 302 each coordinate Mg(2+).

Belongs to the D-alanine--D-alanine ligase family. Mg(2+) serves as cofactor. Mn(2+) is required as a cofactor.

The protein localises to the cytoplasm. The enzyme catalyses 2 D-alanine + ATP = D-alanyl-D-alanine + ADP + phosphate + H(+). Its pathway is cell wall biogenesis; peptidoglycan biosynthesis. In terms of biological role, cell wall formation. This is D-alanine--D-alanine ligase from Deinococcus radiodurans (strain ATCC 13939 / DSM 20539 / JCM 16871 / CCUG 27074 / LMG 4051 / NBRC 15346 / NCIMB 9279 / VKM B-1422 / R1).